The primary structure comprises 1005 residues: Isoleucine--tRNA ligase (1005 aa).

The 'HIGH' region signature appears at P70–H80. Residue E629 participates in L-isoleucyl-5'-AMP binding. The short motif at K670–S674 is the 'KMSKS' region element. K673 contacts ATP.

Belongs to the class-I aminoacyl-tRNA synthetase family. IleS type 1 subfamily. In terms of assembly, monomer.

It is found in the cytoplasm. It catalyses the reaction tRNA(Ile) + L-isoleucine + ATP = L-isoleucyl-tRNA(Ile) + AMP + diphosphate. Its function is as follows. Catalyzes the attachment of isoleucine to tRNA(Ile). As IleRS can inadvertently accommodate and process structurally similar amino acids such as valine, to avoid such errors it has two additional distinct tRNA(Ile)-dependent editing activities. One activity is designated as 'pretransfer' editing and involves the hydrolysis of activated Val-AMP. The other activity is designated 'posttransfer' editing and involves deacylation of mischarged Val-tRNA(Ile). The sequence is that of Isoleucine--tRNA ligase from Rhodopseudomonas palustris (strain ATCC BAA-98 / CGA009).